The primary structure comprises 208 residues: Ypt/Rab-type GTPase ypt71 (208 aa).

GTP contacts are provided by residues 17 to 23, 33 to 40, G66, 124 to 127, and 158 to 160; these read SGVGKTC, FSREYKAT, NQID, and SAK. Residues 37–45 carry the Effector region motif; it reads YKATIGADF. S-geranylgeranyl cysteine attachment occurs at residues C206 and C208. Cysteine methyl ester is present on C208.

It belongs to the small GTPase superfamily. Rab family.

Its subcellular location is the vacuole membrane. Rab activation is generally mediated by a guanine exchange factor (GEF), while inactivation through hydrolysis of bound GTP is catalyzed by a GTPase activating protein (GAP). Its function is as follows. Ypt/Rab-type GTPases are key regulators of membrane trafficking and intracellular vesicular transport. They act as molecular switches that convert between GTP-bound and GDP-bound states, and regulate virtually all steps of membrane traffic from the formation of the transport vesicle at the donor membrane to its fusion at the target membrane. In the GDP-bound state, Ypt proteins are predominantly cytosolic, solubilized through the interaction with a GDP dissociation inhibitor (GDI). In the GTP-bound state, the proteins are membrane bound and interact with specific effector proteins that select cargo, promote vesicle movement, or verify the correct site of fusion. Act antagonistically to ypt7 in regulating vacuolar morphology, promoting vacuolar fission. This chain is Ypt/Rab-type GTPase ypt71 (ypt71), found in Schizosaccharomyces pombe (strain 972 / ATCC 24843) (Fission yeast).